A 301-amino-acid polypeptide reads, in one-letter code: MAKSLLKTSSLSGRTKLLHQTGLSLYSTSHGFYEEEVKKTLQQFPGGSIDLQKEDNGIGILTLNNPSKMNAFSGVMMLQLLEKVIELENWTEGKGLIVRGAKNTFSSGSDLNAVKSLGTPEDGMAVCMFMQNTLTRFMRLPLISVALVQGWALGGGAEFTTACDFRLMTPESKIRFVHKEMGIIPSWGGTTRLVEIIGSRQALKVLSGALKLDSKNALNIGMVEEVLQSSDETKSLEEAQEWLKQFIQGPPEVIRALKKSVCSGRELYLEEALQNERDLLGTVWGGPANLEAIAKKGKFNK.

Residue Lys-211 is modified to N6-acetyllysine; alternate. Lys-211 is subject to N6-succinyllysine; alternate. Lys-295 carries the post-translational modification N6-succinyllysine.

It belongs to the enoyl-CoA hydratase/isomerase family.

It is found in the cytoplasm. The protein localises to the cytosol. The enzyme catalyses (2S)-ethylmalonyl-CoA + H(+) = butanoyl-CoA + CO2. It carries out the reaction (S)-methylmalonyl-CoA + H(+) = propanoyl-CoA + CO2. The catalysed reaction is (2R)-ethylmalonyl-CoA + H(+) = butanoyl-CoA + CO2. In terms of biological role, decarboxylates ethylmalonyl-CoA, a potentially toxic metabolite, to form butyryl-CoA, suggesting it might be involved in metabolite proofreading. Acts preferentially on (S)-ethylmalonyl-CoA but also has some activity on the (R)-isomer. Also has methylmalonyl-CoA decarboxylase activity at lower level. The chain is Ethylmalonyl-CoA decarboxylase (ECHDC1) from Pongo abelii (Sumatran orangutan).